The sequence spans 181 residues: Adenine phosphoribosyltransferase (181 aa).

It belongs to the purine/pyrimidine phosphoribosyltransferase family. Homodimer.

It is found in the cytoplasm. The enzyme catalyses AMP + diphosphate = 5-phospho-alpha-D-ribose 1-diphosphate + adenine. It functions in the pathway purine metabolism; AMP biosynthesis via salvage pathway; AMP from adenine: step 1/1. In terms of biological role, catalyzes a salvage reaction resulting in the formation of AMP, that is energically less costly than de novo synthesis. This chain is Adenine phosphoribosyltransferase, found in Methylorubrum populi (strain ATCC BAA-705 / NCIMB 13946 / BJ001) (Methylobacterium populi).